Reading from the N-terminus, the 91-residue chain is DNA-binding protein HRL18 (91 aa).

This sequence belongs to the bacterial histone-like protein family.

Its function is as follows. Histone-like DNA-binding protein which is capable of wrapping DNA to stabilize it, and thus to prevent its denaturation under extreme environmental conditions. The sequence is that of DNA-binding protein HRL18 from Rhizobium leguminosarum.